The following is a 292-amino-acid chain: Phosphatidylserine decarboxylase proenzyme (292 aa).

Active-site charge relay system; for autoendoproteolytic cleavage activity residues include D89, H146, and S252. S252 (schiff-base intermediate with substrate; via pyruvic acid; for decarboxylase activity) is an active-site residue. S252 is modified (pyruvic acid (Ser); by autocatalysis).

This sequence belongs to the phosphatidylserine decarboxylase family. PSD-B subfamily. Prokaryotic type I sub-subfamily. As to quaternary structure, heterodimer of a large membrane-associated beta subunit and a small pyruvoyl-containing alpha subunit. Pyruvate is required as a cofactor. In terms of processing, is synthesized initially as an inactive proenzyme. Formation of the active enzyme involves a self-maturation process in which the active site pyruvoyl group is generated from an internal serine residue via an autocatalytic post-translational modification. Two non-identical subunits are generated from the proenzyme in this reaction, and the pyruvate is formed at the N-terminus of the alpha chain, which is derived from the carboxyl end of the proenzyme. The autoendoproteolytic cleavage occurs by a canonical serine protease mechanism, in which the side chain hydroxyl group of the serine supplies its oxygen atom to form the C-terminus of the beta chain, while the remainder of the serine residue undergoes an oxidative deamination to produce ammonia and the pyruvoyl prosthetic group on the alpha chain. During this reaction, the Ser that is part of the protease active site of the proenzyme becomes the pyruvoyl prosthetic group, which constitutes an essential element of the active site of the mature decarboxylase.

The protein localises to the cell membrane. It carries out the reaction a 1,2-diacyl-sn-glycero-3-phospho-L-serine + H(+) = a 1,2-diacyl-sn-glycero-3-phosphoethanolamine + CO2. It functions in the pathway phospholipid metabolism; phosphatidylethanolamine biosynthesis; phosphatidylethanolamine from CDP-diacylglycerol: step 2/2. In terms of biological role, catalyzes the formation of phosphatidylethanolamine (PtdEtn) from phosphatidylserine (PtdSer). The protein is Phosphatidylserine decarboxylase proenzyme of Shewanella sp. (strain ANA-3).